The primary structure comprises 114 residues: Cyclin-dependent kinase 2-associated protein 1 (114 aa).

A disordered region spans residues 18 to 57 (AGSVHSPSTSMATSSQYRQLLSDYGPPSLGYTQGTGNSQV). The interaction with CDK2AP2 stretch occupies residues 19-24 (GSVHSP). Positions 20 to 36 (SVHSPSTSMATSSQYRQ) are enriched in polar residues. Serine 45 bears the Phosphoserine; by IKKE mark. The span at 47 to 57 (GYTQGTGNSQV) shows a compositional bias: polar residues.

It belongs to the CDK2AP family. As to quaternary structure, homodimer. Component of the nucleosome remodeling and deacetylase (NuRD) repressor complex, composed of core proteins MTA1, MTA2, MTA3, RBBP4, RBBP7, HDAC1, HDAC2, MBD2, MBD3, and peripherally associated proteins CDK2AP1, CDK2AP2, GATAD2A, GATAD2B, CHD3, CHD4 and CHD5. The exact stoichiometry of the NuRD complex is unknown, and some subunits such as MBD2 and MBD3, GATAD2A and GATAD2B, and CHD3, CHD4 and CHD5 define mutually exclusive NuRD complexes. Interacts with monomeric unphosphorylated CDK2. Interacts with CDK2AP2. Interacts with GATAD2A. Interacts with HDAC1. Interacts with HDAC2. Interacts with MBD2. Interacts with MBD3. Interacts with RBBP4. Interacts with RBBP7. Phosphorylated in vitro by IKBKE at Ser-45.

Its subcellular location is the nucleus. The protein resides in the chromosome. Inhibitor of cyclin-dependent kinase CDK2. Also acts as a component of the histone deacetylase NuRD complex which participates in the remodeling of chromatin. The protein is Cyclin-dependent kinase 2-associated protein 1 (Cdk2ap1) of Mus musculus (Mouse).